We begin with the raw amino-acid sequence, 511 residues long: Maturase K (511 aa).

It belongs to the intron maturase 2 family. MatK subfamily.

The protein localises to the plastid. It is found in the chloroplast. In terms of biological role, usually encoded in the trnK tRNA gene intron. Probably assists in splicing its own and other chloroplast group II introns. The sequence is that of Maturase K from Bromus inermis (Smooth brome grass).